The chain runs to 499 residues: MKHSLNALLIFLIITSAWGGSKGPLDQLEKGGETAQSADPQWEQLNNKNLSMPLLPADFHKENTVTNDWIPEGEEDDDYLDLEKIFSEDDDYIDIVDSLSVSPTDSDVSAGNILQLFHGKSRIQRLNILNAKFAFNLYRVLKDQVNTFDNIFIAPVGISTAMGMISLGLKGETHEQVHSILHFKDFVNASSKYEITTIHNLFRKLTHRLFRRNFGYTLRSVNDLYIQKQFPILLDFKTKVREYYFAEAQIADFSDPAFISKTNNHIMKLTKGLIKDALENIDPATQMMILNCIYFKGSWVNKFPVEMTHNHNFRLNEREVVKVSMMQTKGNFLAANDQELDCDILQLEYVGGISMLIVVPHKMSGMKTLEAQLTPRVVERWQKSMTNRTREVLLPKFKLEKNYNLVESLKLMGIRMLFDKNGNMAGISDQRIAIDLFKHQGTITVNEEGTQATTVTTVGFMPLSTQVRFTVDRPFLFLIYEHRTSCLLFMGRVANPSRS.

The first 19 residues, 1-19 (MKHSLNALLIFLIITSAWG), serve as a signal peptide directing secretion. Ser37 bears the Phosphoserine; by FAM20C mark. The N-linked (GlcNAc...) (complex) asparagine glycan is linked to Asn49. The interval 68-79 (DWIPEGEEDDDY) is chemotactic activity. 2 tandem repeats follow at residues 73–83 (GEEDDDYLDLE) and 87–97 (SEDDDYIDIVD). A 2 X 11 AA approximate repeats, Asp/Glu-rich (acidic) (hirudin-like) region spans residues 73-97 (GEEDDDYLDLEKIFSEDDDYIDIVD). Tyr79 and Tyr92 each carry sulfotyrosine. An N-linked (GlcNAc...) asparagine glycan is attached at Asn188. A glycosaminoglycan-binding site region spans residues 192 to 212 (KYEITTIHNLFRKLTHRLFRR). Asn387 is a glycosylation site (N-linked (GlcNAc...) asparagine).

The protein belongs to the serpin family. Post-translationally, phosphorylated by FAM20C in the extracellular medium. In terms of tissue distribution, expressed predominantly in liver. Also present in plasma. As to expression, expressed in plasma (at protein level). Expressed in liver.

In terms of biological role, thrombin inhibitor activated by the glycosaminoglycans, heparin or dermatan sulfate. In the presence of the latter, HC-II becomes the predominant thrombin inhibitor in place of antithrombin III (AT-III). Also inhibits chymotrypsin, but in a glycosaminoglycan-independent manner. Peptides at the N-terminal of HC-II have chemotactic activity for both monocytes and neutrophils. Its function is as follows. Shows negligible inhibition, in vitro, of thrombin and tPA and no inhibition of factor Xa, in vitro. This is Heparin cofactor 2 (SERPIND1) from Homo sapiens (Human).